Reading from the N-terminus, the 131-residue chain is MARSNQTARKATGGKAPHFAMRVWQHSTPPLKKPYRYKPGTVALREIRKYQKTTDLVIRKLPFQRLVKEIAQSLKADLRFQTGAVSALQEAAEAFMVGMFEDTNLCAMHAKRSTIMPKDIQLAKRLRGDRV.

Residue Lys-10 is modified to N6,N6,N6-trimethyllysine; alternate. Lys-10 is modified (N6,N6-dimethyllysine; alternate). Lys-10 carries the post-translational modification N6-acetyllysine; alternate. Lys-10 carries the post-translational modification N6-methyllysine; alternate. A Phosphothreonine modification is found at Thr-12. Position 15 is an N6-acetyllysine (Lys-15). Ser-27 carries the post-translational modification Phosphoserine. Lys-32 carries the N6,N6,N6-trimethyllysine; alternate modification. Lys-32 is modified (N6,N6-dimethyllysine; alternate). Lys-32 is subject to N6-methyllysine; alternate.

This sequence belongs to the histone H3 family. The nucleosome is a histone octamer containing two molecules each of H2A, H2B, H3 and H4 assembled in one H3-H4 heterotetramer and two H2A-H2B heterodimers. The octamer wraps approximately 147 bp of DNA. In terms of tissue distribution, expressed in roots, seedlings, leaves buds and open flowers.

Its subcellular location is the nucleus. The protein resides in the chromosome. In terms of biological role, core component of nucleosome. Nucleosomes wrap and compact DNA into chromatin, limiting DNA accessibility to the cellular machineries which require DNA as a template. Histones thereby play a central role in transcription regulation, DNA repair, DNA replication and chromosomal stability. DNA accessibility is regulated via a complex set of post-translational modifications of histones, also called histone code, and nucleosome remodeling. This is Histone H3-like 4 from Arabidopsis thaliana (Mouse-ear cress).